A 258-amino-acid chain; its full sequence is Imidazole glycerol phosphate synthase subunit HisF (258 aa).

Residues aspartate 11 and aspartate 130 contribute to the active site.

It belongs to the HisA/HisF family. In terms of assembly, heterodimer of HisH and HisF.

The protein resides in the cytoplasm. The enzyme catalyses 5-[(5-phospho-1-deoxy-D-ribulos-1-ylimino)methylamino]-1-(5-phospho-beta-D-ribosyl)imidazole-4-carboxamide + L-glutamine = D-erythro-1-(imidazol-4-yl)glycerol 3-phosphate + 5-amino-1-(5-phospho-beta-D-ribosyl)imidazole-4-carboxamide + L-glutamate + H(+). The protein operates within amino-acid biosynthesis; L-histidine biosynthesis; L-histidine from 5-phospho-alpha-D-ribose 1-diphosphate: step 5/9. Its function is as follows. IGPS catalyzes the conversion of PRFAR and glutamine to IGP, AICAR and glutamate. The HisF subunit catalyzes the cyclization activity that produces IGP and AICAR from PRFAR using the ammonia provided by the HisH subunit. The polypeptide is Imidazole glycerol phosphate synthase subunit HisF (Methylobacterium sp. (strain 4-46)).